A 201-amino-acid chain; its full sequence is 3-isopropylmalate dehydratase small subunit (201 aa).

The protein belongs to the LeuD family. LeuD type 1 subfamily. As to quaternary structure, heterodimer of LeuC and LeuD.

The catalysed reaction is (2R,3S)-3-isopropylmalate = (2S)-2-isopropylmalate. It participates in amino-acid biosynthesis; L-leucine biosynthesis; L-leucine from 3-methyl-2-oxobutanoate: step 2/4. Catalyzes the isomerization between 2-isopropylmalate and 3-isopropylmalate, via the formation of 2-isopropylmaleate. The polypeptide is 3-isopropylmalate dehydratase small subunit (Parvibaculum lavamentivorans (strain DS-1 / DSM 13023 / NCIMB 13966)).